A 294-amino-acid polypeptide reads, in one-letter code: Small ribosomal subunit biogenesis GTPase RsgA (294 aa).

Residues 63–223 form the CP-type G domain; the sequence is KNELLRPPIA…VADTPGFSSL (161 aa). GTP is bound by residues 112–115 and 166–174; these read SKID and GQSGVGKSS. Zn(2+)-binding residues include Cys-247, Cys-252, His-254, and Cys-260.

It belongs to the TRAFAC class YlqF/YawG GTPase family. RsgA subfamily. Monomer. Associates with 30S ribosomal subunit, binds 16S rRNA. Zn(2+) is required as a cofactor.

The protein resides in the cytoplasm. One of several proteins that assist in the late maturation steps of the functional core of the 30S ribosomal subunit. Helps release RbfA from mature subunits. May play a role in the assembly of ribosomal proteins into the subunit. Circularly permuted GTPase that catalyzes slow GTP hydrolysis, GTPase activity is stimulated by the 30S ribosomal subunit. This Halalkalibacterium halodurans (strain ATCC BAA-125 / DSM 18197 / FERM 7344 / JCM 9153 / C-125) (Bacillus halodurans) protein is Small ribosomal subunit biogenesis GTPase RsgA.